Reading from the N-terminus, the 3084-residue chain is Highly reducing polyketide synthase sdnO (3084 aa).

Residues 4–430 (PIPLAVVGIA…GTNAHAVLEK (427 aa)) form the Ketosynthase family 3 (KS3) domain. Catalysis depends on for beta-ketoacyl synthase activity residues Cys178, His313, and His353. The segment at 541–841 (FIFTGQGAQW…LAGPLRQSVA (301 aa)) is malonyl-CoA:ACP transacylase (MAT) domain. Ser632 functions as the For malonyltransferase activity in the catalytic mechanism. The tract at residues 931–1071 (HDLLGLRMTD…GSVLIDLVSS (141 aa)) is N-terminal hotdog fold. Positions 931–1243 (HDLLGLRMTD…RSAEADMLVF (313 aa)) are dehydratase (DH) domain. The PKS/mFAS DH domain occupies 931 to 1275 (HDLLGLRMTD…LRSLAALDGA (345 aa)). Residue His963 is the Proton acceptor; for dehydratase activity of the active site. Residues 1099 to 1275 (LQPGEDIPPS…LRSLAALDGA (177 aa)) form a C-terminal hotdog fold region. Asp1177 serves as the catalytic Proton donor; for dehydratase activity. Positions 1733-2045 (GTAHAATFVE…RHENMTKYVV (313 aa)) are enoylreductase (ER) domain. Residues 2069–2252 (ATYVVAGGLG…YMALNIGLIE (184 aa)) form a catalytic ketoreductase (KRc) domain region. The 78-residue stretch at 2363–2440 (DIEAFAARAI…ALARKVTLRS (78 aa)) folds into the Carrier domain. Position 2400 is an O-(pantetheine 4'-phosphoryl)serine (Ser2400). A disordered region spans residues 2445–2501 (GGAGGDASSTGNSESMARTPSDSSTVPTSIPATPSRSPSREPPAKETLTKSQQHLPI). Polar residues predominate over residues 2456–2481 (NSESMARTPSDSSTVPTSIPATPSRS). Residues 2482–2492 (PSREPPAKETL) are compositionally biased toward basic and acidic residues. Residues 2864-3084 (HFYSQLNRAF…LGVVRRVVEG (221 aa)) form a choline/carnitine acyltransferase domain region.

The protein operates within antibiotic biosynthesis. Highly reducing polyketide synthase; part of the gene cluster that mediates the biosynthesis of sordarin and hypoxysordarin, glycoside antibiotics with a unique tetracyclic diterpene aglycone structure. First, the geranylgeranyl diphosphate synthase sdnC constructs GGDP from farnesyl diphosphate and isopentenyl diphosphate. The diterpene cyclase sdnA then catalyzes the cyclization of GGDP to afford cycloaraneosene. Cycloaraneosene is then hydroxylated four times by the putative cytochrome P450 monooxygenases sdnB, sdnE, sdnF and sdnH to give a hydroxylated cycloaraneosene derivative such as cycloaraneosene-8,9,13,19-tetraol. Although the order of the hydroxylations is unclear, at least C8, C9 and C13 of the cycloaraneosene skeleton are hydroxylated before the sordaricin formation. Dehydration of the 13-hydroxy group of the hydroxylated cycloaraneosene derivative might be catalyzed by an unassigned hypothetical protein such as sdnG and sdnP to construct the cyclopentadiene moiety. The FAD-dependent oxidoreductase sdnN is proposed to catalyze the oxidation at C9 of the hydroxylated cycloaraneosene derivative and also catalyze the Baeyer-Villiger oxidation to give the lactone intermediate. The presumed lactone intermediate would be hydrolyzed to give an acrolein moiety and a carboxylate moiety. Then, [4+2]cycloaddition would occur between the acrolein moiety and the cyclopentadiene moiety to give sordaricin. SdnN might also be involved in the [4+2]cycloaddition after the hypothesized oxidation to accommodate the oxidized product and prompt the [4+2]cycloaddition. GDP-6-deoxy-D-altrose may be biosynthesized from GDP-D-mannose by the putative GDP-mannose-4,6-dehydratase sdnI and the short-chain dehydrogenase sdnK. The glycosyltransferase sdnJ catalyzes the attachment of 6-deoxy-D-altrose onto the 19-hydroxy group of sordaricin to give 4'-O-demethylsordarin. The methyltransferase sdnD would complete the biosynthesis of sordarin. Sordarin can be further modified into hypoxysordarin. The unique acyl chain at the 3'-hydroxy group of hypoxysordarin would be constructed by an iterative type I PKS sdnO and the trans-acting polyketide methyltransferase sdnL. SdnL would be responsible for the introduction of an alpha-methyl group of the polyketide chain. Alternatively, the putative beta-lactamase-like sdnR might be responsible for the cleavage and transfer of the polyketide chain from the PKS sdnO to sordarin. Two putative cytochrome P450 monooxygenases, sdnQ and sdnT, might catalyze the epoxidations of the polyketide chain to complete the biosynthesis of hypoxysordarin. Transcriptional regulators sdnM and sdnS are presumably encoded for the transcriptional regulation of the expression of the sdn gene cluster. This is Highly reducing polyketide synthase sdnO from Sordaria araneosa (Pleurage araneosa).